Here is a 415-residue protein sequence, read N- to C-terminus: Serine hydroxymethyltransferase (415 aa).

(6S)-5,6,7,8-tetrahydrofolate-binding positions include Leu-117 and 121-123; that span reads GHL. Lys-226 is modified (N6-(pyridoxal phosphate)lysine). (6S)-5,6,7,8-tetrahydrofolate is bound by residues Glu-241 and 349–351; that span reads SPF.

Belongs to the SHMT family. As to quaternary structure, homodimer. Pyridoxal 5'-phosphate is required as a cofactor.

The protein resides in the cytoplasm. The catalysed reaction is (6R)-5,10-methylene-5,6,7,8-tetrahydrofolate + glycine + H2O = (6S)-5,6,7,8-tetrahydrofolate + L-serine. The protein operates within one-carbon metabolism; tetrahydrofolate interconversion. Its pathway is amino-acid biosynthesis; glycine biosynthesis; glycine from L-serine: step 1/1. Its function is as follows. Catalyzes the reversible interconversion of serine and glycine with tetrahydrofolate (THF) serving as the one-carbon carrier. This reaction serves as the major source of one-carbon groups required for the biosynthesis of purines, thymidylate, methionine, and other important biomolecules. Also exhibits THF-independent aldolase activity toward beta-hydroxyamino acids, producing glycine and aldehydes, via a retro-aldol mechanism. The polypeptide is Serine hydroxymethyltransferase (Geotalea daltonii (strain DSM 22248 / JCM 15807 / FRC-32) (Geobacter daltonii)).